The primary structure comprises 120 residues: NAD(P)H-quinone oxidoreductase subunit 3, chloroplastic (120 aa).

A run of 3 helical transmembrane segments spans residues 9–29 (IFWT…WISG), 64–84 (MFAL…PWAM), and 88–108 (VLGV…VVGL).

It belongs to the complex I subunit 3 family. NDH is composed of at least 16 different subunits, 5 of which are encoded in the nucleus.

It localises to the plastid. The protein resides in the chloroplast thylakoid membrane. The enzyme catalyses a plastoquinone + NADH + (n+1) H(+)(in) = a plastoquinol + NAD(+) + n H(+)(out). It carries out the reaction a plastoquinone + NADPH + (n+1) H(+)(in) = a plastoquinol + NADP(+) + n H(+)(out). In terms of biological role, NDH shuttles electrons from NAD(P)H:plastoquinone, via FMN and iron-sulfur (Fe-S) centers, to quinones in the photosynthetic chain and possibly in a chloroplast respiratory chain. The immediate electron acceptor for the enzyme in this species is believed to be plastoquinone. Couples the redox reaction to proton translocation, and thus conserves the redox energy in a proton gradient. The sequence is that of NAD(P)H-quinone oxidoreductase subunit 3, chloroplastic from Lolium perenne (Perennial ryegrass).